The sequence spans 971 residues: Exportin-2 (971 aa).

The region spanning 29–102 (AEKFLESVEG…KANIVNLMLS (74 aa)) is the Importin N-terminal domain.

It belongs to the XPO2/CSE1 family. As to quaternary structure, interacts with cftr.

Its subcellular location is the cytoplasm. The protein localises to the nucleus. In terms of biological role, export receptor for importin alpha. Mediates importin-alpha re-export from the nucleus to the cytoplasm after import substrates have been released into the nucleoplasm. Negatively regulates fluid secretion and plays a role in fluid homeostasis by down-regulating cftr activity. The sequence is that of Exportin-2 (cse1l) from Pagrus major (Red sea bream).